The chain runs to 521 residues: MFLIEKRRKLIQKKANYHSDPTTVFNHLCGSRPATLLLETAEVNKKNNLESIMIVDSAIRVSAVKNSVKITALSENGAEILSILKENPHKKIKFFEKNKSINLIFPSLDNNLDEDKKIFSLSVFDSFRFIMKSVNNTKRTSKAMFFGGLFSYDLISNFESLPNVKKKQKCPDFCFYLAETLLVVDHQKKTCLIQSSLFGRNVDEKNRIKKRTEEIEKKLEEKLTSIPKNKTTVPVQLTSNISDFQYSSTIKKLQKLIQKGEIFQVVPSRKFFLPCDNSLSAYQELKKSNPSPYMFFMQDEDFILFGASPESSLKYDEKNRQIELYPIAGTRPRGRKKDGTLDLDLDSRIELEMRTNHKELAEHLMLVDLARNDLARICEPGSRYVSDLVKVDKYSHVMHLVSKVVGQLKYGLDALHAYSSCMNMGTLTGAPKVRAMQLIAEYEGEGRGSYGGAIGYFTDLGNLDTCITIRSAYVESGVATIQAGAGVVFNSIPEDEVKESLNKAQAVINAIKKAHFTMGSS.

L-tryptophan-binding positions include threonine 40 and 292-294; that span reads PYM. Chorismate is bound at residue 329 to 330; it reads GT. Residue glutamate 362 participates in Mg(2+) binding. Residues tyrosine 450, arginine 470, 484–486, and glycine 486 each bind chorismate; that span reads GAG. Glutamate 499 is a Mg(2+) binding site.

Belongs to the anthranilate synthase component I family. As to quaternary structure, heterotetramer consisting of two non-identical subunits: a beta subunit (TrpG) and a large alpha subunit (TrpE). Mg(2+) is required as a cofactor.

It carries out the reaction chorismate + L-glutamine = anthranilate + pyruvate + L-glutamate + H(+). It functions in the pathway amino-acid biosynthesis; L-tryptophan biosynthesis; L-tryptophan from chorismate: step 1/5. With respect to regulation, feedback inhibited by tryptophan. Part of a heterotetrameric complex that catalyzes the two-step biosynthesis of anthranilate, an intermediate in the biosynthesis of L-tryptophan. In the first step, the glutamine-binding beta subunit (TrpG) of anthranilate synthase (AS) provides the glutamine amidotransferase activity which generates ammonia as a substrate that, along with chorismate, is used in the second step, catalyzed by the large alpha subunit of AS (TrpE) to produce anthranilate. In the absence of TrpG, TrpE can synthesize anthranilate directly from chorismate and high concentrations of ammonia. This is Anthranilate synthase component 1 (trpE) from Buchnera aphidicola subsp. Acyrthosiphon pisum (strain APS) (Acyrthosiphon pisum symbiotic bacterium).